The chain runs to 231 residues: 2-C-methyl-D-erythritol 4-phosphate cytidylyltransferase (231 aa).

It belongs to the IspD/TarI cytidylyltransferase family. IspD subfamily.

The catalysed reaction is 2-C-methyl-D-erythritol 4-phosphate + CTP + H(+) = 4-CDP-2-C-methyl-D-erythritol + diphosphate. The protein operates within isoprenoid biosynthesis; isopentenyl diphosphate biosynthesis via DXP pathway; isopentenyl diphosphate from 1-deoxy-D-xylulose 5-phosphate: step 2/6. Its function is as follows. Catalyzes the formation of 4-diphosphocytidyl-2-C-methyl-D-erythritol from CTP and 2-C-methyl-D-erythritol 4-phosphate (MEP). The chain is 2-C-methyl-D-erythritol 4-phosphate cytidylyltransferase from Fusobacterium nucleatum subsp. nucleatum (strain ATCC 25586 / DSM 15643 / BCRC 10681 / CIP 101130 / JCM 8532 / KCTC 2640 / LMG 13131 / VPI 4355).